A 238-amino-acid chain; its full sequence is DnaA regulatory inactivator Hda (238 aa).

The protein belongs to the DnaA family. HdA subfamily. The active form seems to be an ADP-bound monomer. Forms the RIDA complex (regulatory inactivation of DnaA) of ATP-DnaA, ADP-Hda and the DNA-loaded beta sliding clamp (dnaN).

In terms of biological role, mediates the interaction of DNA replication initiator protein DnaA with DNA polymerase subunit beta sliding clamp (dnaN). Stimulates hydrolysis of ATP-DnaA to ADP-DnaA, rendering DnaA inactive for reinitiation, a process called regulatory inhibition of DnaA or RIDA. This is DnaA regulatory inactivator Hda from Pectobacterium atrosepticum (strain SCRI 1043 / ATCC BAA-672) (Erwinia carotovora subsp. atroseptica).